Here is a 54-residue protein sequence, read N- to C-terminus: UPF0391 membrane protein BMEI0373 (54 aa).

The next 2 helical transmembrane spans lie at 5–25 (VLVF…GIAG) and 29–48 (GIAQ…SLIA).

Belongs to the UPF0391 family.

It is found in the cell membrane. The sequence is that of UPF0391 membrane protein BMEI0373 from Brucella melitensis biotype 1 (strain ATCC 23456 / CCUG 17765 / NCTC 10094 / 16M).